The chain runs to 198 residues: 7-methyl-GTP pyrophosphatase (198 aa).

The active-site Proton acceptor is the D75.

Belongs to the Maf family. YceF subfamily. A divalent metal cation is required as a cofactor.

The protein localises to the cytoplasm. The enzyme catalyses N(7)-methyl-GTP + H2O = N(7)-methyl-GMP + diphosphate + H(+). Its function is as follows. Nucleoside triphosphate pyrophosphatase that hydrolyzes 7-methyl-GTP (m(7)GTP). May have a dual role in cell division arrest and in preventing the incorporation of modified nucleotides into cellular nucleic acids. The chain is 7-methyl-GTP pyrophosphatase from Bartonella quintana (strain Toulouse) (Rochalimaea quintana).